A 307-amino-acid polypeptide reads, in one-letter code: Protein EI24 homolog (307 aa).

2 helical membrane passes run 53–73 and 92–112; these read FIHCIFLNGIIFLGTYLIYLY and MFTIIYFSLWVYPVYIFSIIA. N-linked (GlcNAc...) asparagine glycosylation is present at asparagine 135. A run of 4 helical transmembrane segments spans residues 153-173, 175-195, 225-245, and 260-280; these read LFGVILVMSAIIAFIPYTNFI, FVIITWLYSFWCFDYKWILRG, FFFPMLIGNAIFSILYPLFII, and GILPKQIPIFYVPEIIVNVIL.

The protein belongs to the EI24 family.

The protein resides in the membrane. This is Protein EI24 homolog from Dictyostelium discoideum (Social amoeba).